Reading from the N-terminus, the 357-residue chain is H-2 class I histocompatibility antigen, D-37 alpha chain (357 aa).

The N-terminal stretch at 1–20 (MLLFAHLLQLLVSATVPTQS) is a signal peptide. Positions 21-110 (SPHSLRYFTT…LLGYYNQSND (90 aa)) are alpha-1. Topologically, residues 21–304 (SPHSLRYFTT…EPPPSTVSNM (284 aa)) are extracellular. A glycan (N-linked (GlcNAc...) asparagine) is linked at asparagine 106. The tract at residues 111-202 (ESHTLQWMYG…RLGNETLQRS (92 aa)) is alpha-2. A disulfide bridge links cysteine 121 with cysteine 184. An N-linked (GlcNAc...) asparagine glycan is attached at asparagine 196. Residues 203–294 (DPPKAHVTHH…GLPEPLTLRW (92 aa)) form an alpha-3 region. One can recognise an Ig-like C1-type domain in the interval 205–293 (PKAHVTHHPR…EGLPEPLTLR (89 aa)). A disulfide bridge links cysteine 223 with cysteine 279. The interval 295–304 (EPPPSTVSNM) is connecting peptide. Residues 305-327 (VIIAVLVVLGAVIILGAVVAFVM) traverse the membrane as a helical segment. Topologically, residues 328–357 (KRRRHIGVKGCYAHVLGSKSFQTSDWPQKA) are cytoplasmic. Position 347 is a phosphoserine (serine 347).

This sequence belongs to the MHC class I family. In terms of assembly, heterodimer of an alpha chain and a beta chain (beta-2-microglobulin).

The protein localises to the membrane. Its function is as follows. Involved in the presentation of foreign antigens to the immune system. The protein is H-2 class I histocompatibility antigen, D-37 alpha chain (H2-T23) of Mus musculus (Mouse).